Consider the following 142-residue polypeptide: COA8 family protein Y39B6A.34, mitochondrial (142 aa).

It belongs to the COA8 family.

The protein resides in the mitochondrion inner membrane. Its function is as follows. May be required for cytochrome c complex (COX) assembly and function, COX being the terminal component of the mitochondrial respiratory chain. In Caenorhabditis elegans, this protein is COA8 family protein Y39B6A.34, mitochondrial.